Consider the following 355-residue polypeptide: Histidine biosynthesis bifunctional protein HisB (355 aa).

Positions 1-166 (MKQKILFIDR…DITKEIIKRN (166 aa)) are histidinol-phosphatase. The active-site Nucleophile is D9. Residues D9 and D11 each contribute to the Mg(2+) site. The active-site Proton donor is D11. Positions 93, 95, 101, and 103 each coordinate Zn(2+). Position 130 (D130) interacts with Mg(2+). The tract at residues 167-355 (RYREVIRETK…NTLPTSKGIL (189 aa)) is imidazoleglycerol-phosphate dehydratase.

The protein in the N-terminal section; belongs to the histidinol-phosphatase family. This sequence in the C-terminal section; belongs to the imidazoleglycerol-phosphate dehydratase family. The cofactor is Mg(2+). Zn(2+) is required as a cofactor.

The protein resides in the cytoplasm. The catalysed reaction is D-erythro-1-(imidazol-4-yl)glycerol 3-phosphate = 3-(imidazol-4-yl)-2-oxopropyl phosphate + H2O. The enzyme catalyses L-histidinol phosphate + H2O = L-histidinol + phosphate. It functions in the pathway amino-acid biosynthesis; L-histidine biosynthesis; L-histidine from 5-phospho-alpha-D-ribose 1-diphosphate: step 6/9. Its pathway is amino-acid biosynthesis; L-histidine biosynthesis; L-histidine from 5-phospho-alpha-D-ribose 1-diphosphate: step 8/9. The protein is Histidine biosynthesis bifunctional protein HisB of Buchnera aphidicola subsp. Schizaphis graminum (strain Sg).